The primary structure comprises 194 residues: dTTP/UTP pyrophosphatase (194 aa).

The active-site Proton acceptor is the Asp76.

Belongs to the Maf family. YhdE subfamily. Requires a divalent metal cation as cofactor.

The protein resides in the cytoplasm. The catalysed reaction is dTTP + H2O = dTMP + diphosphate + H(+). It catalyses the reaction UTP + H2O = UMP + diphosphate + H(+). Its function is as follows. Nucleoside triphosphate pyrophosphatase that hydrolyzes dTTP and UTP. May have a dual role in cell division arrest and in preventing the incorporation of modified nucleotides into cellular nucleic acids. This is dTTP/UTP pyrophosphatase from Shewanella sp. (strain MR-7).